The sequence spans 803 residues: Leucine--tRNA ligase (803 aa).

The 'HIGH' region motif lies at 40–51 (PYPSGAGLHVGH). The short motif at 575–579 (KMSKS) is the 'KMSKS' region element. Residue K578 coordinates ATP.

The protein belongs to the class-I aminoacyl-tRNA synthetase family.

Its subcellular location is the cytoplasm. It catalyses the reaction tRNA(Leu) + L-leucine + ATP = L-leucyl-tRNA(Leu) + AMP + diphosphate. In Listeria monocytogenes serotype 4b (strain F2365), this protein is Leucine--tRNA ligase.